A 143-amino-acid polypeptide reads, in one-letter code: MFMGEYSHTLDVKGRLIIPAKFRNQLGEKFIVTRWMEHALRAMPMPVWEKLEQQLNQLPLGKKEARQFKRFVMAGAMEAEIDKQGRIIIPSNLKTYAGLAKNVIVTGSGDSFEIWSDENWQSYTAETAENFDDIAEGLVDFDF.

2 SpoVT-AbrB domains span residues 5–47 (EYSH…PMPV) and 76–119 (AMEA…SDEN).

Belongs to the MraZ family. In terms of assembly, forms oligomers.

The protein resides in the cytoplasm. Its subcellular location is the nucleoid. This is Transcriptional regulator MraZ from Leuconostoc citreum (strain KM20).